The sequence spans 105 residues: Small ribosomal subunit protein uS10 (105 aa).

It belongs to the universal ribosomal protein uS10 family. As to quaternary structure, part of the 30S ribosomal subunit.

Involved in the binding of tRNA to the ribosomes. This Nitratidesulfovibrio vulgaris (strain DSM 19637 / Miyazaki F) (Desulfovibrio vulgaris) protein is Small ribosomal subunit protein uS10.